The chain runs to 381 residues: MSHFLPFSRPAIGDEEIKAVESVLRSGWITTGPQNHQLEQDFCEKFGSKHAIAVCSATAGMHVVLMAMGIGPGDEVITPSQTWVSTINIITLLGAEPVMVDIDRDTLMVSAESVKKAITPRTKAIIPVHYAGAPCDLDALRAVADEAGIPLIEDAAHAIGTRYKDEWIGEKGTSIFSFHAIKNVTCAEGGLVVTDDDELANRVRCLKFHGLGVDAFDRQVQGRKPQAEVVEPGYKYNLSDIHAAIAVVQLSRLEEMNAKRAELVALYREKLQDSPLEMLSVPEYPHLHANHLFMVRVDKNACGIDRDTFMEKLKQKEIGTGLHFRAAHTQKYYRERYPSLSLPQSEWNSATLCSLPLFPDMSNKDVIRVVDAINEILSEHI.

The residue at position 182 (K182) is an N6-(pyridoxal phosphate)lysine.

Belongs to the DegT/DnrJ/EryC1 family. ArnB subfamily. In terms of assembly, homodimer. The cofactor is pyridoxal 5'-phosphate.

The enzyme catalyses UDP-4-amino-4-deoxy-beta-L-arabinose + 2-oxoglutarate = UDP-beta-L-threo-pentopyranos-4-ulose + L-glutamate. It participates in nucleotide-sugar biosynthesis; UDP-4-deoxy-4-formamido-beta-L-arabinose biosynthesis; UDP-4-deoxy-4-formamido-beta-L-arabinose from UDP-alpha-D-glucuronate: step 2/3. It functions in the pathway bacterial outer membrane biogenesis; lipopolysaccharide biosynthesis. Catalyzes the conversion of UDP-4-keto-arabinose (UDP-Ara4O) to UDP-4-amino-4-deoxy-L-arabinose (UDP-L-Ara4N). The modified arabinose is attached to lipid A and is required for resistance to polymyxin and cationic antimicrobial peptides. The chain is UDP-4-amino-4-deoxy-L-arabinose--oxoglutarate aminotransferase from Proteus mirabilis (strain HI4320).